Reading from the N-terminus, the 209-residue chain is Protein-L-isoaspartate O-methyltransferase (209 aa).

Residue Ser-55 is part of the active site.

This sequence belongs to the methyltransferase superfamily. L-isoaspartyl/D-aspartyl protein methyltransferase family.

It is found in the cytoplasm. The catalysed reaction is [protein]-L-isoaspartate + S-adenosyl-L-methionine = [protein]-L-isoaspartate alpha-methyl ester + S-adenosyl-L-homocysteine. Functionally, catalyzes the methyl esterification of L-isoaspartyl residues in peptides and proteins that result from spontaneous decomposition of normal L-aspartyl and L-asparaginyl residues. It plays a role in the repair and/or degradation of damaged proteins. This chain is Protein-L-isoaspartate O-methyltransferase, found in Anaeromyxobacter dehalogenans (strain 2CP-C).